Reading from the N-terminus, the 291-residue chain is MSRQRPVIGVFDSGFGGLTVLREIVRLVPNAEYLYFGDTARLPYGTKSADTVARYALGACHFLEGQGAEHLVIACNTATALAMDAIEAKANVPAIGVVEPGASAAAAISKTRSVAVIGTEATISSHAYHHALERLGINAYEKATPLLVPLVEEGWTDHPVTKQVAEIYLQDAFVRREQRSDVLVLGCTHYPLIRPLLRKVVPSDVAIVDSAESTAKALAKKLGIAPPSASAAGATQAAGARAQMAPSAPEPKEGTPDFRFFVTDSVQKFRRLGSGFLGHPVDNVEHVDLGG.

Substrate is bound by residues 12–13 and 44–45; these read DS and YG. C75 serves as the catalytic Proton donor/acceptor. 76–77 contacts substrate; it reads NT. C187 (proton donor/acceptor) is an active-site residue. 188–189 contributes to the substrate binding site; that stretch reads TH. The segment covering 234–247 has biased composition (low complexity); that stretch reads ATQAAGARAQMAPS. Positions 234-257 are disordered; sequence ATQAAGARAQMAPSAPEPKEGTPD.

It belongs to the aspartate/glutamate racemases family.

It carries out the reaction L-glutamate = D-glutamate. It participates in cell wall biogenesis; peptidoglycan biosynthesis. Provides the (R)-glutamate required for cell wall biosynthesis. The chain is Glutamate racemase from Koribacter versatilis (strain Ellin345).